Reading from the N-terminus, the 3241-residue chain is PHD finger protein rhinoceros (3241 aa).

Positions 1-16 (MSQRGKRGNQQHHQSH) are enriched in basic residues. The disordered stretch occupies residues 1–126 (MSQRGKRGNQ…GASSSSSWQA (126 aa)). Composition is skewed to low complexity over residues 42 to 55 (PPNG…AEVT) and 90 to 126 (RAAA…SWQA). A PHD-type 1 zinc finger spans residues 312–362 (NVICDVCRSPDSEEANEMVFCDNCNICVHQACYGITAIPSGQWLCRTCSMG). Residues 364–398 (KPDCVLCPNKGGAMKSNKSGKHWAHVSCALWIPEV) form a C2HC pre-PHD-type zinc finger. The PHD-type 2 zinc-finger motif lies at 422–481 (LICVLCRKRVGSCIQCSVKPCKTAYHVTCAFQHGLEMRAIIEEGNAEDGVKLRSYCQKHS). 6 disordered regions span residues 482-501 (MSKG…ASVA), 508-554 (NRYG…ARAQ), 737-1266 (SGKQ…VATP), 1279-1483 (PQRQ…STKV), 1500-1613 (PKTN…SETR), and 1632-1746 (NLGA…QHLL). Residues 540–554 (KTELTSEERNQARAQ) are compositionally biased toward basic and acidic residues. The span at 762–777 (KKLNNGILSSRTSSPE) shows a compositional bias: polar residues. A compositionally biased stretch (low complexity) spans 807–874 (KSSAAAATST…SGSSSAGSGV (68 aa)). The segment covering 931 to 943 (ERCRNRQEPERGA) has biased composition (basic and acidic residues). Polar residues predominate over residues 949 to 965 (QSKSVPNRSQASRSKPT). Positions 995–1007 (DADESVSSDESEE) are enriched in acidic residues. Positions 1019–1031 (STTTSGLATTGSA) are enriched in low complexity. Polar residues predominate over residues 1060 to 1075 (TVESNVSDSQNQQTIR). Residues 1087–1104 (TAATTSSTSQAASSTSKA) are compositionally biased toward low complexity. Polar residues-rich tracts occupy residues 1117 to 1126 (IGNSTKTKPN) and 1151 to 1163 (NMRS…TLQP). Positions 1184-1211 (KVKDSSSRVSNEADKSSLEKVRPKEHLQ) are enriched in basic and acidic residues. The segment covering 1313 to 1327 (VTSATISGSGSSVPA) has biased composition (polar residues). T1346 is modified (phosphothreonine). At S1352 the chain carries Phosphoserine. Phosphothreonine is present on T1364. A compositionally biased stretch (low complexity) spans 1382-1426 (SSSSSGDSESSSSSSSSGSSSSSGGSDSDSESQASNSENPSSREP). T1456 bears the Phosphothreonine mark. A compositionally biased stretch (polar residues) spans 1463–1483 (NVLNIPSTRSRQNSTTKSTKV). Over residues 1541–1558 (SPEKTVSRCKSRAEESPK) the composition is skewed to basic and acidic residues. Polar residues predominate over residues 1576–1594 (KGTSSLDKLLNKKQQQMNH). Residues 1599 to 1608 (TPPPISPTPP) show a composition bias toward pro residues. Residues 1664 to 1675 (TAPTRTQLSASA) are compositionally biased toward polar residues. The span at 1688–1699 (PAAPLPASPTPT) shows a compositional bias: pro residues. Residues 1717-1731 (RRMRWRSRRRRRRRS) are compositionally biased toward basic residues. Coiled-coil stretches lie at residues 1741 to 1770 (HTQH…ASKY) and 1893 to 1925 (SEED…KEAV). 11 disordered regions span residues 2037 to 2061 (LEKS…GQPA), 2124 to 2148 (AERR…PVVT), 2203 to 2227 (NNTN…TPNN), 2346 to 2454 (TPPV…GGVT), 2598 to 2629 (ATGT…PAPN), 2667 to 2691 (SEEV…ARSQ), 2768 to 2811 (NDDS…NSSS), 2832 to 2911 (GAGA…SVDE), 2964 to 3015 (NKRG…TTTM), 3042 to 3169 (KAET…EAAM), and 3184 to 3241 (VNVG…CEVR). Over residues 2359 to 2381 (KRTSVSGSNLSKKQTHKSPQLPQ) the composition is skewed to polar residues. The span at 2392–2402 (PLQPPTPPAPV) shows a compositional bias: pro residues. The segment covering 2430–2439 (GSGGSGAPGR) has biased composition (gly residues). Polar residues-rich tracts occupy residues 2598–2611 (ATGT…QHSG) and 2673–2689 (DSDS…SDAR). The segment covering 2855–2865 (NNDNNGKTGAA) has biased composition (polar residues). The segment covering 2876–2887 (KTLESSEDDHQA) has biased composition (basic and acidic residues). Phosphoserine occurs at positions 2880 and 2881. A compositionally biased stretch (polar residues) spans 2899-2911 (ANETPSGVSSVDE). Over residues 2964–2974 (NKRGVVVKDGE) the composition is skewed to basic and acidic residues. The segment covering 2984–3002 (KRPKSSKPKKEKKEKKRQK) has biased composition (basic residues). Low complexity predominate over residues 3003–3015 (QQQLILSSSTTTM). S3104 and S3110 each carry phosphoserine. Composition is skewed to polar residues over residues 3115-3130 (LLNS…NTSP) and 3184-3197 (VNVG…NSLP). A compositionally biased stretch (low complexity) spans 3198–3218 (SASGTGSASSNSCNSNSINNN). Positions 3219-3230 (GSGGGRASGEGG) are enriched in gly residues.

Belongs to the JADE family.

The protein resides in the nucleus. In terms of biological role, may function as a negative regulator of the EGFR/Ras/MAPK signaling pathway during eye development. The sequence is that of PHD finger protein rhinoceros (rno) from Drosophila melanogaster (Fruit fly).